A 680-amino-acid chain; its full sequence is Probable Xaa-Pro aminopeptidase P (680 aa).

4 residues coordinate Mn(2+): Asp-477, Asp-488, Glu-586, and Glu-600.

Belongs to the peptidase M24B family. Mn(2+) is required as a cofactor.

It carries out the reaction Release of any N-terminal amino acid, including proline, that is linked to proline, even from a dipeptide or tripeptide.. Functionally, catalyzes the removal of a penultimate prolyl residue from the N-termini of peptides. The polypeptide is Probable Xaa-Pro aminopeptidase P (AMPP) (Podospora anserina (strain S / ATCC MYA-4624 / DSM 980 / FGSC 10383) (Pleurage anserina)).